We begin with the raw amino-acid sequence, 328 residues long: Malate dehydrogenase (328 aa).

16–22 is an NAD(+) binding site; sequence GAAGQIS. Residues arginine 97 and arginine 103 each coordinate substrate. NAD(+) is bound by residues asparagine 110, glutamine 117, and 134 to 136; that span reads VGN. The substrate site is built by asparagine 136 and arginine 167. Catalysis depends on histidine 192, which acts as the Proton acceptor.

This sequence belongs to the LDH/MDH superfamily. MDH type 2 family.

The enzyme catalyses (S)-malate + NAD(+) = oxaloacetate + NADH + H(+). In terms of biological role, catalyzes the reversible oxidation of malate to oxaloacetate. The sequence is that of Malate dehydrogenase from Corynebacterium glutamicum (strain R).